A 778-amino-acid polypeptide reads, in one-letter code: 5-methyltetrahydropteroyltriglutamate--homocysteine methyltransferase (778 aa).

5-methyltetrahydropteroyltri-L-glutamate-binding positions include 17–20 (RELK) and K118. Residues 436–438 (IGS) and E489 each bind L-homocysteine. L-methionine contacts are provided by residues 436–438 (IGS) and E489. Residues 520–521 (RC) and W566 contribute to the 5-methyltetrahydropteroyltri-L-glutamate site. D604 is a binding site for L-homocysteine. D604 is a binding site for L-methionine. E610 is a binding site for 5-methyltetrahydropteroyltri-L-glutamate. Zn(2+) contacts are provided by H646, C648, and E670. The active-site Proton donor is H699. C731 lines the Zn(2+) pocket.

Belongs to the vitamin-B12 independent methionine synthase family. Zn(2+) serves as cofactor.

It catalyses the reaction 5-methyltetrahydropteroyltri-L-glutamate + L-homocysteine = tetrahydropteroyltri-L-glutamate + L-methionine. The protein operates within amino-acid biosynthesis; L-methionine biosynthesis via de novo pathway; L-methionine from L-homocysteine (MetE route): step 1/1. Functionally, catalyzes the transfer of a methyl group from 5-methyltetrahydrofolate to homocysteine resulting in methionine formation. In Vibrio vulnificus (strain CMCP6), this protein is 5-methyltetrahydropteroyltriglutamate--homocysteine methyltransferase.